The sequence spans 180 residues: ATP-dependent protease subunit HslV (180 aa).

Thr-7 is an active-site residue. Na(+)-binding residues include Gly-165, Cys-168, and Thr-171.

It belongs to the peptidase T1B family. HslV subfamily. A double ring-shaped homohexamer of HslV is capped on each side by a ring-shaped HslU homohexamer. The assembly of the HslU/HslV complex is dependent on binding of ATP.

It localises to the cytoplasm. It carries out the reaction ATP-dependent cleavage of peptide bonds with broad specificity.. Its activity is regulated as follows. Allosterically activated by HslU binding. Protease subunit of a proteasome-like degradation complex believed to be a general protein degrading machinery. This Bacillus anthracis (strain A0248) protein is ATP-dependent protease subunit HslV.